The following is a 375-amino-acid chain: Terpene cyclase braA (375 aa).

3 residues coordinate Mg(2+): Asp116, Asn264, and Ser268. A D(D/E)XX(D/E) motif motif is present at residues 116–120; that stretch reads DDEID. The NSE motif signature appears at 264–272; the sequence is NDVLSLQKE. The WxxxxxRY motif signature appears at 348-355; that stretch reads WSYSCERY. (2E,6E)-farnesyl diphosphate is bound by residues Arg354 and Tyr355.

This sequence belongs to the terpene synthase family. Homodimer. Requires Mg(2+) as cofactor.

It catalyses the reaction (2E,6E)-farnesyl diphosphate + H2O = trichobrasilenol + diphosphate. It functions in the pathway secondary metabolite biosynthesis. Its function is as follows. Terpene cyclase; part of the gene cluster that mediates the biosynthesis of the brasilane terpene glycosides brasilane D and E. The biosynthesis starts with the activity of the terpene cyclase braA that converts farnesyl pyrophosphate into the sesquiterpene alcohol trichobrasilenol. Subsequently, trichobrasilenol is glycosylated by the O-glycosyltransferase braB putatively using UDP-GlcNAc as sugar donor to yield brasilane A. The latter then undergoes two rounds of oxidation performed by the cytochrome P450 monooxygenase braC. In the first round braC hydroxylates C-12 forming brasilane D, which serves as substrate in the second round to establish the epoxide at the bond between C-5 and C-10 and oxidize the alcohol at C-12 to an aldehyde leading to the final product brasilane E. The sequence is that of Terpene cyclase braA from Annulohypoxylon truncatum (Hypoxylon truncatum).